The chain runs to 558 residues: Polysialic acid transport protein KpsD (558 aa).

A signal peptide spans 1 to 20 (MKLFKSILLIAACHAAQASA).

The protein to E.coli K1 KpsD.

The protein localises to the periplasm. Functionally, involved in the translocation of the polysialic acid capsule across the outer membrane to the cell surface. May function as the periplasmic binding element of the PSA transport system, in which it transiently interacts with the membrane component of the transporter, binds polysaccharide and transports the polymer to a component in the outer membrane. This is Polysialic acid transport protein KpsD (kpsD) from Escherichia coli.